A 171-amino-acid polypeptide reads, in one-letter code: NADH-quinone oxidoreductase subunit I 1 (171 aa).

2 consecutive 4Fe-4S ferredoxin-type domains span residues 39 to 71 (IVLT…LTKA) and 81 to 110 (EHFR…LTPD). [4Fe-4S] cluster is bound by residues Cys-51, Cys-54, Cys-57, Cys-61, Cys-90, Cys-93, Cys-96, and Cys-100.

It belongs to the complex I 23 kDa subunit family. As to quaternary structure, NDH-1 is composed of 14 different subunits. Subunits NuoA, H, J, K, L, M, N constitute the membrane sector of the complex. [4Fe-4S] cluster is required as a cofactor.

It is found in the cell inner membrane. The enzyme catalyses a quinone + NADH + 5 H(+)(in) = a quinol + NAD(+) + 4 H(+)(out). NDH-1 shuttles electrons from NADH, via FMN and iron-sulfur (Fe-S) centers, to quinones in the respiratory chain. The immediate electron acceptor for the enzyme in this species is believed to be ubiquinone. Couples the redox reaction to proton translocation (for every two electrons transferred, four hydrogen ions are translocated across the cytoplasmic membrane), and thus conserves the redox energy in a proton gradient. In Rhodopseudomonas palustris (strain BisB5), this protein is NADH-quinone oxidoreductase subunit I 1.